We begin with the raw amino-acid sequence, 142 residues long: Large ribosomal subunit protein uL13 (142 aa).

It belongs to the universal ribosomal protein uL13 family. Part of the 50S ribosomal subunit.

Its function is as follows. This protein is one of the early assembly proteins of the 50S ribosomal subunit, although it is not seen to bind rRNA by itself. It is important during the early stages of 50S assembly. The protein is Large ribosomal subunit protein uL13 of Pseudomonas fluorescens (strain Pf0-1).